Consider the following 158-residue polypeptide: uncharacterized protein (158 aa).

The FPG-type zinc-finger motif lies at 109-143 (RVHARTGLPCPVCGDTVREVSFADKSFQYCPTCQT).

This is an uncharacterized protein from Mycobacterium tuberculosis (strain ATCC 25618 / H37Rv).